The primary structure comprises 137 residues: Nucleoside diphosphate kinase (137 aa).

Residues K9, F57, R85, T91, R102, and N112 each coordinate ATP. The active-site Pros-phosphohistidine intermediate is H115.

This sequence belongs to the NDK family. Homotetramer. The cofactor is Mg(2+).

It is found in the cytoplasm. The enzyme catalyses a 2'-deoxyribonucleoside 5'-diphosphate + ATP = a 2'-deoxyribonucleoside 5'-triphosphate + ADP. The catalysed reaction is a ribonucleoside 5'-diphosphate + ATP = a ribonucleoside 5'-triphosphate + ADP. In terms of biological role, major role in the synthesis of nucleoside triphosphates other than ATP. The ATP gamma phosphate is transferred to the NDP beta phosphate via a ping-pong mechanism, using a phosphorylated active-site intermediate. This Leptospira interrogans serogroup Icterohaemorrhagiae serovar Lai (strain 56601) protein is Nucleoside diphosphate kinase.